The chain runs to 131 residues: MYQRDGNHTMITIKFDEKGLVPVIAQDKTTKDVLMLAYANKEAVDLTRSTGYAHYYSRSRNKLWKKGEESGHLQKVHEILVDCDEDAVIYLVDQLTAACHTGYRSCFYRRLDGTVSGERMFDPDEVYKKSE.

Residue D82 coordinates Mg(2+). C83 is a binding site for Zn(2+). Mg(2+) is bound by residues D84 and D86. The Zn(2+) site is built by C99 and C106.

This sequence belongs to the PRA-CH family. As to quaternary structure, homodimer. Mg(2+) is required as a cofactor. Requires Zn(2+) as cofactor.

Its subcellular location is the cytoplasm. It catalyses the reaction 1-(5-phospho-beta-D-ribosyl)-5'-AMP + H2O = 1-(5-phospho-beta-D-ribosyl)-5-[(5-phospho-beta-D-ribosylamino)methylideneamino]imidazole-4-carboxamide. It functions in the pathway amino-acid biosynthesis; L-histidine biosynthesis; L-histidine from 5-phospho-alpha-D-ribose 1-diphosphate: step 3/9. In terms of biological role, catalyzes the hydrolysis of the adenine ring of phosphoribosyl-AMP. This is Phosphoribosyl-AMP cyclohydrolase from Methanospirillum hungatei JF-1 (strain ATCC 27890 / DSM 864 / NBRC 100397 / JF-1).